The sequence spans 439 residues: Vacuolar protein sorting-associated protein 4 (439 aa).

Residues 8–75 (LSKGIDLVQK…TRAEQLKDHL (68 aa)) enclose the MIT domain. The tract at residues 76–113 (EKQAQNKSTAESSVNGSTKAKKSNGDGNGSGDDNDDAD) is disordered. The segment covering 80 to 93 (QNKSTAESSVNGST) has biased composition (polar residues). 175 to 182 (GPPGTGKS) lines the ATP pocket.

This sequence belongs to the AAA ATPase family. As to quaternary structure, monomer or homodimer (in nucleotide-free form). Decamer, dodecamer or tetradecamer of two stacked respective homooligomeric rings (when bound to ATP); the dodecameric form seems to be predominant.

The protein localises to the endosome membrane. Its function is as follows. Pre-vacuolar protein sorting protein involved in the transport of biosynthetic membrane proteins from the prevacuolar/endosomal compartment to the vacuole. Required for multivesicular body (MVB) protein sorting. Catalyzes the ATP-dependent dissociation of class E VPS proteins from endosomal membranes, such as the disassembly of the ESCRT-III complex. Required for extracellular secretion of the secreted aspartyl proteases SAP2, SAP4, SAP5, and SAP6. Its regulation of the pre-vacuolar secretory pathway is critical for virulence. The protein is Vacuolar protein sorting-associated protein 4 of Candida albicans (strain SC5314 / ATCC MYA-2876) (Yeast).